We begin with the raw amino-acid sequence, 179 residues long: MSNKEQKDMKKSGKHQRVHKTLPSDDFKNSDAVNPADKPAVGTSGMGSHSSGSDMQEAREPVQKKMQDFKGDDGTGLLMEKRKQFEEDVNASFRSLNENLQSILKAQQNSRQELKSLYCERFGSVYHNWLVEMDRTRDQEEYFSFITQQQMKILQTAIEDHETKLKNAKDMCDTFLKVW.

The segment covering 1-11 (MSNKEQKDMKK) has biased composition (basic and acidic residues). The tract at residues 1–75 (MSNKEQKDMK…MQDFKGDDGT (75 aa)) is disordered. Positions 42–53 (GTSGMGSHSSGS) are enriched in low complexity. Basic and acidic residues predominate over residues 56 to 75 (QEAREPVQKKMQDFKGDDGT). A coiled-coil region spans residues 146 to 175 (ITQQQMKILQTAIEDHETKLKNAKDMCDTF).

This sequence belongs to the XLR/SYCP3 family. Expressed in testis (at protein level). Also expressed in ovary. Not detected in other tissues tested.

The protein localises to the nucleus. It is found in the chromosome. In Mus musculus (Mouse), this protein is X-linked lymphocyte-regulated protein 5C.